A 243-amino-acid chain; its full sequence is UDP-2,3-diacylglucosamine hydrolase (243 aa).

Residues aspartate 8, histidine 10, aspartate 41, asparagine 79, and histidine 114 each contribute to the Mn(2+) site. 79-80 (NR) contacts substrate. Substrate contacts are provided by aspartate 122, lysine 164, lysine 167, and histidine 195. Mn(2+)-binding residues include histidine 195 and histidine 197.

The protein belongs to the LpxH family. Mn(2+) is required as a cofactor.

Its subcellular location is the cell inner membrane. The enzyme catalyses UDP-2-N,3-O-bis[(3R)-3-hydroxytetradecanoyl]-alpha-D-glucosamine + H2O = 2-N,3-O-bis[(3R)-3-hydroxytetradecanoyl]-alpha-D-glucosaminyl 1-phosphate + UMP + 2 H(+). The protein operates within glycolipid biosynthesis; lipid IV(A) biosynthesis; lipid IV(A) from (3R)-3-hydroxytetradecanoyl-[acyl-carrier-protein] and UDP-N-acetyl-alpha-D-glucosamine: step 4/6. Functionally, hydrolyzes the pyrophosphate bond of UDP-2,3-diacylglucosamine to yield 2,3-diacylglucosamine 1-phosphate (lipid X) and UMP by catalyzing the attack of water at the alpha-P atom. Involved in the biosynthesis of lipid A, a phosphorylated glycolipid that anchors the lipopolysaccharide to the outer membrane of the cell. The sequence is that of UDP-2,3-diacylglucosamine hydrolase from Vibrio vulnificus (strain CMCP6).